The sequence spans 772 residues: Acylamino-acid-releasing enzyme 2 (772 aa).

Residues Ser617, Asp708, and His740 each act as charge relay system in the active site.

It belongs to the peptidase S9C family. Homotetramer.

The protein localises to the cytoplasm. It carries out the reaction Cleavage of an N-acetyl or N-formyl amino acid from the N-terminus of a polypeptide.. Its function is as follows. Catalyzes the hydrolysis of the N-terminal peptide bond of an N-acetylated peptide to generate an N-acetylated amino acid and a peptide with a free N-terminus. This Oryza sativa subsp. japonica (Rice) protein is Acylamino-acid-releasing enzyme 2.